We begin with the raw amino-acid sequence, 167 residues long: MSVTLHTSHGDIKVEIYCESVPKTAENFLALCGSGYYDKSPFHRVIPKFMAQTGAPATPNPPENPKGGRSIWGGAFEDEIRPALRHGARGVLSMANKGPGTNGSQFFITFDKAPHLDGLNTVFGRVIGDEGLATLAKMEAVEVDRKNRPKEPVRIENVTIHANPLAG.

One can recognise a PPIase cyclophilin-type domain in the interval 1–160 (MSVTLHTSHG…EPVRIENVTI (160 aa)).

This sequence belongs to the cyclophilin-type PPIase family. PPIL3 subfamily.

The catalysed reaction is [protein]-peptidylproline (omega=180) = [protein]-peptidylproline (omega=0). Its function is as follows. PPIases accelerate the folding of proteins. It catalyzes the cis-trans isomerization of proline imidic peptide bonds in oligopeptides. This is Peptidyl-prolyl cis-trans isomerase-like 3 (CYP10) from Gibberella zeae (strain ATCC MYA-4620 / CBS 123657 / FGSC 9075 / NRRL 31084 / PH-1) (Wheat head blight fungus).